The chain runs to 118 residues: UPF0342 protein BCG9842_B4422 (118 aa).

It belongs to the UPF0342 family.

The chain is UPF0342 protein BCG9842_B4422 from Bacillus cereus (strain G9842).